A 413-amino-acid chain; its full sequence is Serine hydroxymethyltransferase (413 aa).

(6S)-5,6,7,8-tetrahydrofolate-binding positions include Leu119 and 123–125 (GHL). Residue Lys228 is modified to N6-(pyridoxal phosphate)lysine. 351–353 (SPF) contacts (6S)-5,6,7,8-tetrahydrofolate.

It belongs to the SHMT family. In terms of assembly, homodimer. Pyridoxal 5'-phosphate serves as cofactor.

The protein resides in the cytoplasm. The enzyme catalyses (6R)-5,10-methylene-5,6,7,8-tetrahydrofolate + glycine + H2O = (6S)-5,6,7,8-tetrahydrofolate + L-serine. The protein operates within one-carbon metabolism; tetrahydrofolate interconversion. It participates in amino-acid biosynthesis; glycine biosynthesis; glycine from L-serine: step 1/1. Functionally, catalyzes the reversible interconversion of serine and glycine with tetrahydrofolate (THF) serving as the one-carbon carrier. This reaction serves as the major source of one-carbon groups required for the biosynthesis of purines, thymidylate, methionine, and other important biomolecules. Also exhibits THF-independent aldolase activity toward beta-hydroxyamino acids, producing glycine and aldehydes, via a retro-aldol mechanism. In Clostridium botulinum (strain Langeland / NCTC 10281 / Type F), this protein is Serine hydroxymethyltransferase.